The primary structure comprises 220 residues: 7-cyano-7-deazaguanine synthase (220 aa).

7–17 (ISGGMDSSTAA) serves as a coordination point for ATP. Positions 187, 195, 198, and 201 each coordinate Zn(2+).

Belongs to the QueC family. The cofactor is Zn(2+).

The enzyme catalyses 7-carboxy-7-deazaguanine + NH4(+) + ATP = 7-cyano-7-deazaguanine + ADP + phosphate + H2O + H(+). It participates in purine metabolism; 7-cyano-7-deazaguanine biosynthesis. Catalyzes the ATP-dependent conversion of 7-carboxy-7-deazaguanine (CDG) to 7-cyano-7-deazaguanine (preQ(0)). The sequence is that of 7-cyano-7-deazaguanine synthase from Campylobacter hominis (strain ATCC BAA-381 / DSM 21671 / CCUG 45161 / LMG 19568 / NCTC 13146 / CH001A).